A 237-amino-acid chain; its full sequence is Leucyl/phenylalanyl-tRNA--protein transferase (237 aa).

Belongs to the L/F-transferase family.

It is found in the cytoplasm. It carries out the reaction N-terminal L-lysyl-[protein] + L-leucyl-tRNA(Leu) = N-terminal L-leucyl-L-lysyl-[protein] + tRNA(Leu) + H(+). The enzyme catalyses N-terminal L-arginyl-[protein] + L-leucyl-tRNA(Leu) = N-terminal L-leucyl-L-arginyl-[protein] + tRNA(Leu) + H(+). The catalysed reaction is L-phenylalanyl-tRNA(Phe) + an N-terminal L-alpha-aminoacyl-[protein] = an N-terminal L-phenylalanyl-L-alpha-aminoacyl-[protein] + tRNA(Phe). In terms of biological role, functions in the N-end rule pathway of protein degradation where it conjugates Leu, Phe and, less efficiently, Met from aminoacyl-tRNAs to the N-termini of proteins containing an N-terminal arginine or lysine. The polypeptide is Leucyl/phenylalanyl-tRNA--protein transferase (Photobacterium profundum (strain SS9)).